The sequence spans 590 residues: Arginine--tRNA ligase (590 aa).

Positions 126-136 (PNVAKEMHVGH) match the 'HIGH' region motif.

It belongs to the class-I aminoacyl-tRNA synthetase family. In terms of assembly, monomer.

The protein localises to the cytoplasm. The catalysed reaction is tRNA(Arg) + L-arginine + ATP = L-arginyl-tRNA(Arg) + AMP + diphosphate. The protein is Arginine--tRNA ligase of Streptomyces avermitilis (strain ATCC 31267 / DSM 46492 / JCM 5070 / NBRC 14893 / NCIMB 12804 / NRRL 8165 / MA-4680).